Here is a 536-residue protein sequence, read N- to C-terminus: Glucan 1,6-alpha-glucosidase (536 aa).

Asp-194 (nucleophile) is an active-site residue. Glu-236 serves as the catalytic Proton donor.

This sequence belongs to the glycosyl hydrolase 13 family.

The protein resides in the cytoplasm. It catalyses the reaction Hydrolysis of (1-&gt;6)-alpha-D-glucosidic linkages in (1-&gt;6)-alpha-D-glucans and derived oligosaccharides.. In terms of biological role, the physiological substrates may be short isomaltosaccharides. This chain is Glucan 1,6-alpha-glucosidase (dexB), found in Streptococcus mutans serotype c (strain ATCC 700610 / UA159).